A 225-amino-acid polypeptide reads, in one-letter code: Urease accessory protein UreF (225 aa).

Belongs to the UreF family. UreD, UreF and UreG form a complex that acts as a GTP-hydrolysis-dependent molecular chaperone, activating the urease apoprotein by helping to assemble the nickel containing metallocenter of UreC. The UreE protein probably delivers the nickel.

It localises to the cytoplasm. Functionally, required for maturation of urease via the functional incorporation of the urease nickel metallocenter. This chain is Urease accessory protein UreF, found in Thermosynechococcus vestitus (strain NIES-2133 / IAM M-273 / BP-1).